A 184-amino-acid chain; its full sequence is Putative serine carboxypeptidase-like 52 (184 aa).

Residues 1 to 22 form the signal peptide; that stretch reads MRTFSPKLLLLLLLVLRHHAES. The N-linked (GlcNAc...) asparagine glycan is linked to Asn-93.

The protein belongs to the peptidase S10 family.

The protein resides in the secreted. The polypeptide is Putative serine carboxypeptidase-like 52 (SCPL52) (Arabidopsis thaliana (Mouse-ear cress)).